Here is a 279-residue protein sequence, read N- to C-terminus: Urease accessory protein UreD (279 aa).

Belongs to the UreD family. In terms of assembly, ureD, UreF and UreG form a complex that acts as a GTP-hydrolysis-dependent molecular chaperone, activating the urease apoprotein by helping to assemble the nickel containing metallocenter of UreC. The UreE protein probably delivers the nickel.

It localises to the cytoplasm. In terms of biological role, required for maturation of urease via the functional incorporation of the urease nickel metallocenter. This chain is Urease accessory protein UreD, found in Paracoccus denitrificans (strain Pd 1222).